We begin with the raw amino-acid sequence, 168 residues long: ATP synthase F(1) complex subunit delta, mitochondrial (168 aa).

Residues 1–22 constitute a mitochondrion transit peptide; it reads MLPAALLRHPGLRRLVLQARTY. Residues lysine 136 and lysine 165 each carry the N6-acetyllysine; alternate modification. 2 positions are modified to N6-succinyllysine; alternate: lysine 136 and lysine 165.

The protein belongs to the ATPase epsilon chain family. In terms of assembly, component of the ATP synthase complex composed at least of ATP5F1A/subunit alpha, ATP5F1B/subunit beta, ATP5MC1/subunit c (homooctomer), MT-ATP6/subunit a, MT-ATP8/subunit 8, ATP5ME/subunit e, ATP5MF/subunit f, ATP5MG/subunit g, ATP5MK/subunit k, ATP5MJ/subunit j, ATP5F1C/subunit gamma, ATP5F1D/subunit delta, ATP5F1E/subunit epsilon, ATP5PF/subunit F6, ATP5PB/subunit b, ATP5PD/subunit d, ATP5PO/subunit OSCP. ATP synthase complex consists of a soluble F(1) head domain (subunits alpha(3) and beta(3)) - the catalytic core - and a membrane F(0) domain - the membrane proton channel (subunits c, a, 8, e, f, g, k and j). These two domains are linked by a central stalk (subunits gamma, delta, and epsilon) rotating inside the F1 region and a stationary peripheral stalk (subunits F6, b, d, and OSCP). Component of a complex composed at least by ATPIF1, ATP5F1A, ATP5F1B, ATP5F1C AND ATP5F1E.

Its subcellular location is the mitochondrion. It is found in the mitochondrion inner membrane. Subunit delta, of the mitochondrial membrane ATP synthase complex (F(1)F(0) ATP synthase or Complex V) that produces ATP from ADP in the presence of a proton gradient across the membrane which is generated by electron transport complexes of the respiratory chain. ATP synthase complex consist of a soluble F(1) head domain - the catalytic core - and a membrane F(1) domain - the membrane proton channel. These two domains are linked by a central stalk rotating inside the F(1) region and a stationary peripheral stalk. During catalysis, ATP synthesis in the catalytic domain of F(1) is coupled via a rotary mechanism of the central stalk subunits to proton translocation. In vivo, can only synthesize ATP although its ATP hydrolase activity can be activated artificially in vitro. With the central stalk subunit gamma, is essential for the biogenesis of F(1) catalytic part of the ATP synthase complex namely in the formation of F1 assembly intermediate. This chain is ATP synthase F(1) complex subunit delta, mitochondrial, found in Rattus norvegicus (Rat).